Reading from the N-terminus, the 770-residue chain is Protein PAT1 homolog 1 (770 aa).

The tract at residues 1 to 26 is disordered; the sequence is MFRYESLEDCPLDEDEDAFQGLGEED. The tract at residues 1–84 is region A; interaction with DDX6/RCK; sequence MFRYESLEDC…EMDLLGDHEE (84 aa). Positions 1-397 are involved in nuclear foci localization; sequence MFRYESLEDC…HRSSHQDHLR (397 aa). The span at 7-26 shows a compositional bias: acidic residues; it reads LEDCPLDEDEDAFQGLGEED. The segment at 85–388 is region N; interaction with decapping machinery; sequence NLAERLSKMV…LNGAGDRGSH (304 aa). A Nuclear export signal motif is present at residues 86–95; sequence LAERLSKMVI. Ser-177 carries the phosphoserine modification. Residue Thr-178 is modified to Phosphothreonine. Phosphoserine is present on residues Ser-179 and Ser-184. Thr-194 is modified (phosphothreonine). 3 positions are modified to asymmetric dimethylarginine: Arg-217, Arg-223, and Arg-263. Positions 223-397 are involved in RNA-binding; it reads RYPAPYGERM…HRSSHQDHLR (175 aa). Ser-278 is modified (phosphoserine). The residue at position 284 (Arg-284) is an Asymmetric dimethylarginine. The span at 314-323 shows a compositional bias: low complexity; it reads GFRAFFSAPP. 2 disordered regions span residues 314–344 and 360–399; these read GFRA…QNLR and QHRR…LRKD. A compositionally biased stretch (pro residues) spans 324–337; sequence SATPPPQQHPPGPG. A compositionally biased stretch (low complexity) spans 367-380; sequence QRQQQNRSQHRNLN. Arg-385 bears the Omega-N-methylarginine mark. Residues 385–399 are compositionally biased toward basic and acidic residues; the sequence is RGSHRSSHQDHLRKD. Residues 389–448 are region H; sequence RSSHQDHLRKDPYANLMLQREKDWVSKIQMMQLQSTDPYLDDFYYQNYFEKLEKLSAAEE. The tract at residues 398-770 is involved in nuclear speckle localization; the sequence is KDPYANLMLQ…TKLQLVQGIR (373 aa). The region C stretch occupies residues 449-770; sequence IQGDGPKKER…TKLQLVQGIR (322 aa).

It belongs to the PAT1 family. In terms of assembly, interacts (via region A) with DDX6/RCK. Interacts (via region H and region C) with LSM1 and LSM4. Interacts (via region N) with DCP1A, DCP2, EDC3, EDC4 and XRN1. Interacts with the CCR4-NOT complex. Interacts with the Lsm-containing SMN-Sm protein complex. Interacts with EIF4ENIF1/4E-T. In terms of tissue distribution, ubiquitous.

The protein resides in the cytoplasm. It localises to the P-body. It is found in the nucleus. The protein localises to the PML body. Its subcellular location is the nucleus speckle. In terms of biological role, RNA-binding protein involved in deadenylation-dependent decapping of mRNAs, leading to the degradation of mRNAs. Acts as a scaffold protein that connects deadenylation and decapping machinery. Required for cytoplasmic mRNA processing body (P-body) assembly. Its function is as follows. (Microbial infection) In case of infection, required for translation and replication of hepatitis C virus (HCV). This is Protein PAT1 homolog 1 (PATL1) from Homo sapiens (Human).